Here is a 249-residue protein sequence, read N- to C-terminus: Probable transcriptional regulator ycf27 (249 aa).

The region spanning 13-126 is the Response regulatory domain; the sequence is HLLIVDDENN…ELEARIQSIL (114 aa). Position 62 is a 4-aspartylphosphate (Asp62). Positions 82–100 form a DNA-binding region, H-T-H motif; it reads DIPIIMLTALEDVLDKVTG. A DNA-binding region (ompR/PhoB-type) is located at residues 142–246; sequence INLFKTGSLN…ARGTGYLCRK (105 aa).

Its subcellular location is the plastid. It is found in the chloroplast. Its function is as follows. Probable promoter-specific protein mediating the interaction between DNA and RNA polymerase. In Cyanidium caldarium (Red alga), this protein is Probable transcriptional regulator ycf27 (ycf27).